The following is a 944-amino-acid chain: Valine--tRNA ligase (944 aa).

The short motif at 43-53 (PNVTGTLHMGH) is the 'HIGH' region element. The 'KMSKS' region signature appears at 550-554 (KMSKS). ATP is bound at residue K553. A coiled-coil region spans residues 878–944 (LVDMDAERTR…TGLREQRAKL (67 aa)).

This sequence belongs to the class-I aminoacyl-tRNA synthetase family. ValS type 1 subfamily. As to quaternary structure, monomer.

The protein localises to the cytoplasm. It carries out the reaction tRNA(Val) + L-valine + ATP = L-valyl-tRNA(Val) + AMP + diphosphate. Functionally, catalyzes the attachment of valine to tRNA(Val). As ValRS can inadvertently accommodate and process structurally similar amino acids such as threonine, to avoid such errors, it has a 'posttransfer' editing activity that hydrolyzes mischarged Thr-tRNA(Val) in a tRNA-dependent manner. The chain is Valine--tRNA ligase from Xanthomonas campestris pv. campestris (strain 8004).